Here is a 441-residue protein sequence, read N- to C-terminus: Polyketide methyltransferase ustM (441 aa).

The interval 266 to 368 (LEVGAGLGGT…VRKLLRGGGF (103 aa)) is methyltransferase (CMeT) domain.

This sequence belongs to the methyltransferase superfamily.

The protein operates within secondary metabolite biosynthesis. In terms of biological role, polyketide methyltransferase; part of the gene cluster that mediates the biosynthesis of ustilaginoidins, dimeric gamma-naphthopyrones isolated from different fungal species. The first step in the biosynthesis of ustilaginoidins is the production of gamma-naphthopyrone precursor YWA1 by the non-reducing polyketide synthase ustP, via condensation of one acetyl-CoA starter unit with 6 malonyl-CoA units. YWA1 is then probably substrate of the ustZ to yield norrubrofusarin via a dehydration reaction. A key enzyme in the biosynthetic pathway is the laccase ustL, which catalyzes the oxidative dimerization of norrubrofusarin to ustilaginoidin A. It can produce the M- and P-atropisomers in varying amounts, depending on the reaction conditions. For the biosynthesis of 3-methylustilaginoid in derivatives such as chaetochromin A, a methylated derivative of YWA1 is required. The C-methylation is considered to be catalyzed by ustM, the phosphopantetheine attachment site of which indicates that it acts on the growing polyketide chain before release of the product. For the biosynthesis of chaetochromin A, it is assumed that saturation of the D2 double bond takes place before dimerization, and is probably catalyzed by an external reductase because no candidate gene was identified within the cluster. This is Polyketide methyltransferase ustM from Ustilaginoidea virens (Rice false smut fungus).